The sequence spans 439 residues: D-erythronate kinase (439 aa).

ATP contacts are provided by residues S253, 366-369, and G412; that span reads GGDV.

It belongs to the four-carbon acid sugar kinase family.

The catalysed reaction is D-erythronate + ATP = 4-phospho-D-erythronate + ADP + H(+). Its function is as follows. Catalyzes the ATP-dependent phosphorylation of D-erythronate to D-erythronate 4-phosphate. Can also phosphorylate D-threonate and 4-hydroxy-L-threonine, with lower efficiency. In Heliobacterium modesticaldum (strain ATCC 51547 / Ice1), this protein is D-erythronate kinase.